The sequence spans 424 residues: MEFKQGDWVRIERNGTVYEGKVMPSMEGYITIKMKSGYNAGFSIDKVRITLLENNGETANGSRNGGKGCKTNEEELPEPGKKLPKIAILSTGGTIASKIDYRTGAVTSQFTADDILAAIPELKEIADFKGRVISSILSENMDSDSWQNLSKAVVEEIEAGADGVIVTHGTDTMMYSAAALSFMIKTPVPIVFVGSQRSADRPSSDNAMNAICAARVAISDIAEVVVVMHGTTSDDFCEIHRGTKVRKLHTSRRDAFKSVNSLPVGTVDYGTGEIKTFIDYTRRGEKALKFKPGMEPKCALVKFTPGADPTVLDYYISNGYKGLVVEGTGLGHISTKWIPLLRKATDAKMPVIVTSQCLNGRICDRVYDTGRDMLKAGAIEGEDTLPETALVKLMWVLGQTDDFEKAAGMLREDLSGEITECTQR.

A disordered region spans residues Gly-56–Glu-78. Residues Pro-84 to Asp-413 form the Asparaginase/glutaminase domain. Residues Thr-94, Thr-170, Asp-171, and Lys-247 contribute to the active site.

This sequence belongs to the asparaginase 1 family. GatD subfamily. In terms of assembly, heterodimer of GatD and GatE.

The enzyme catalyses L-glutamyl-tRNA(Gln) + L-glutamine + ATP + H2O = L-glutaminyl-tRNA(Gln) + L-glutamate + ADP + phosphate + H(+). Functionally, allows the formation of correctly charged Gln-tRNA(Gln) through the transamidation of misacylated Glu-tRNA(Gln) in organisms which lack glutaminyl-tRNA synthetase. The reaction takes place in the presence of glutamine and ATP through an activated gamma-phospho-Glu-tRNA(Gln). The GatDE system is specific for glutamate and does not act on aspartate. This Methanosarcina acetivorans (strain ATCC 35395 / DSM 2834 / JCM 12185 / C2A) protein is Glutamyl-tRNA(Gln) amidotransferase subunit D.